The chain runs to 65 residues: Large ribosomal subunit protein bL35 (65 aa).

Belongs to the bacterial ribosomal protein bL35 family.

The polypeptide is Large ribosomal subunit protein bL35 (Paraburkholderia xenovorans (strain LB400)).